The sequence spans 436 residues: Drebrin-like protein (436 aa).

The ADF-H domain occupies 2-133 (AVNLSRNGPA…EPECIMEKVA (132 aa)). Thr26 is subject to Phosphothreonine. Ser160 carries the post-translational modification Phosphoserine. Lys176 carries the post-translational modification N6-acetyllysine. A coiled-coil region spans residues 178–232 (NFWAKAEKEEENRRLEEKRRAEEEKQRLEEERRERELQEAARREQRYQEQHRSAG). 2 stretches are compositionally biased toward basic and acidic residues: residues 185 to 229 (KEEE…EQHR) and 264 to 275 (HPREIFKQKERA). Residues 185–371 (KEEENRRLEE…GSGHIDNYMQ (187 aa)) form a disordered region. The span at 276-286 (MSTTSVSSSQP) shows a compositional bias: polar residues. Phosphoserine is present on residues Ser277, Ser280, Ser283, and Ser291. Lys296 bears the N6-acetyllysine mark. At Thr299 the chain carries Phosphothreonine. The residue at position 311 (Ser311) is a Phosphoserine. 2 positions are modified to phosphotyrosine: Tyr340 and Tyr350. One can recognise an SH3 domain in the interval 377–436 (GQGLCARALYDYQAADDTEISFDPENLITGIEVIDEGWWRGYGPDGHFGMFPANYVELIE).

This sequence belongs to the ABP1 family. As to quaternary structure, interacts with FGD1, MAP4K1 and PRAM1. Interacts with ANKRD54. Interacts with WASL and WIPF1. Interacts with SHANK2 and SHANK3. Interacts with both COBL and PACSIN1. Interacts with DNM1 and SYN1. As to expression, detected in brain (at protein level). Widely expressed in brain with highest levels in hippocampus and cerebral cortex. Located primarily in dendrites and, in moderate amounts, in cell bodies. Isoform 1 and isoform 3 are the predominant isoforms in brain.

Its subcellular location is the cytoplasm. It localises to the cytoskeleton. It is found in the cell projection. The protein localises to the lamellipodium. The protein resides in the ruffle. Its subcellular location is the cell cortex. It localises to the cytosol. It is found in the cell membrane. The protein localises to the synapse. The protein resides in the perikaryon. Its subcellular location is the neuron projection. It localises to the dendrite. It is found in the postsynaptic density. The protein localises to the golgi apparatus membrane. The protein resides in the cytoplasmic vesicle. Its subcellular location is the clathrin-coated vesicle membrane. It localises to the podosome. It is found in the early endosome. Adapter protein that binds F-actin and DNM1, and thereby plays a role in receptor-mediated endocytosis. Required for the formation of organized podosome rosettes. May act as a common effector of antigen receptor-signaling pathways in leukocytes. Acts as a key component of the immunological synapse that regulates T-cell activation by bridging TCRs and the actin cytoskeleton to gene activation and endocytic processes. Plays a role in the reorganization of the actin cytoskeleton, formation of cell projections, such as neurites, in neuron morphogenesis and synapse formation via its interaction with WASL and COBL. Does not bind G-actin and promote actin polymerization by itself. In Rattus norvegicus (Rat), this protein is Drebrin-like protein.